Consider the following 148-residue polypeptide: MCCKAILSFCILSSLGNALYFGSHRPQYLREVGQRQYPFEPQAFGMLPVPQQPMGPQPMGPQPMEPQPLPMGPQSPQMQVPDRSCSGCVININCGGRECLPTRPTQTQPTQPSWTVETPPTPTPGASQGCRVCACYVPPPCQICQPCQ.

An N-terminal signal peptide occupies residues 1–18; that stretch reads MCCKAILSFCILSSLGNA. Residues 19–43 constitute a propeptide, removed in mature form; sequence LYFGSHRPQYLREVGQRQYPFEPQA. 5 consecutive repeats follow at residues 46–50, 54–58, 59–63, 64–68, and 71–75; these read MLPVP, MGPQP, MEPQP, and MGPQS. The interval 46 to 75 is repeat-rich region; the sequence is MLPVPQQPMGPQPMGPQPMEPQPLPMGPQS. Residues 52–73 show a composition bias toward pro residues; sequence QPMGPQPMGPQPMEPQPLPMGP. A disordered region spans residues 52 to 80; it reads QPMGPQPMGPQPMEPQPLPMGPQSPQMQV.

It to B.pahangi filarial sheath protein. O-glycosylated.

This is Major microfilarial sheath protein (GP22) from Litomosoides carinii.